The sequence spans 140 residues: Nucleoside diphosphate kinase (140 aa).

The ATP site is built by lysine 11, phenylalanine 59, arginine 87, threonine 93, arginine 104, and asparagine 114. Catalysis depends on histidine 117, which acts as the Pros-phosphohistidine intermediate.

Belongs to the NDK family. In terms of assembly, homotetramer. The cofactor is Mg(2+).

It localises to the cytoplasm. The enzyme catalyses a 2'-deoxyribonucleoside 5'-diphosphate + ATP = a 2'-deoxyribonucleoside 5'-triphosphate + ADP. The catalysed reaction is a ribonucleoside 5'-diphosphate + ATP = a ribonucleoside 5'-triphosphate + ADP. Functionally, major role in the synthesis of nucleoside triphosphates other than ATP. The ATP gamma phosphate is transferred to the NDP beta phosphate via a ping-pong mechanism, using a phosphorylated active-site intermediate. The protein is Nucleoside diphosphate kinase of Erythrobacter litoralis (strain HTCC2594).